A 248-amino-acid polypeptide reads, in one-letter code: Large ribosomal subunit protein uL2 (248 aa).

A disordered region spans residues 203 to 248 (AHPAGGGHHPKGLTPAPRNAPPGRKVGHIAPRRTGRKKGASRTPTQ). Over residues 227-242 (KVGHIAPRRTGRKKGA) the composition is skewed to basic residues.

The protein belongs to the universal ribosomal protein uL2 family. Part of the 50S ribosomal subunit. Forms a bridge to the 30S subunit in the 70S ribosome.

Functionally, one of the primary rRNA binding proteins. Required for association of the 30S and 50S subunits to form the 70S ribosome, for tRNA binding and peptide bond formation. It has been suggested to have peptidyltransferase activity; this is somewhat controversial. Makes several contacts with the 16S rRNA in the 70S ribosome. In Thermofilum pendens (strain DSM 2475 / Hrk 5), this protein is Large ribosomal subunit protein uL2.